We begin with the raw amino-acid sequence, 333 residues long: Taste receptor type 2 member 38 (333 aa).

Topologically, residues 1–17 are extracellular; the sequence is MLTLTRICAVSYEVRST. A helical transmembrane segment spans residues 18–38; the sequence is FLFISVLEFAVGFLTNAFIFL. Residues 39 to 55 lie on the Cytoplasmic side of the membrane; sequence VNFWDVVKRQPLSNSDC. Residues 56 to 76 form a helical membrane-spanning segment; sequence VLLCLSISRLFLHGLLFLSAI. The Extracellular portion of the chain corresponds to 77–94; it reads QLTHFQKLSEPLNHSYQA. Residues 95-115 traverse the membrane as a helical segment; it reads IIMLWIIANQANLWLAACLSL. At 116–142 the chain is on the cytoplasmic side; that stretch reads LYCSKLIRFSHTFLICLASWVSRKISQ. Residues 143 to 163 form a helical membrane-spanning segment; the sequence is MLLGIILCSCICTVLCVWCFF. Topologically, residues 164–190 are extracellular; that stretch reads SRPHFTVTTFLFMNNNTRLNWQIKDLN. N-linked (GlcNAc...) asparagine glycosylation occurs at N178. Residues 191–211 form a helical membrane-spanning segment; sequence LFYSFLFCYLWSVPPFLLFLV. Topologically, residues 212–251 are cytoplasmic; sequence SSGMLTVSLGRHMRTMKVYTRDSRDPSLEAHIKALKSLVS. A helical transmembrane segment spans residues 252-272; the sequence is FFCFFVISSCAAFISVPLLIL. The Extracellular segment spans residues 273–276; that stretch reads WRNK. A helical transmembrane segment spans residues 277 to 297; that stretch reads IGVMVCVGIMAACPSGHAAVL. Residues 298–333 are Cytoplasmic-facing; sequence ISGNATLRRAVTTILLWAQSSMKVRADHKADSRTLC.

This sequence belongs to the G-protein coupled receptor T2R family.

It is found in the membrane. Receptor that may play a role in the perception of bitterness and is gustducin-linked. May play a role in sensing the chemical composition of the gastrointestinal content. The activity of this receptor may stimulate alpha gustducin, mediate PLC-beta-2 activation and lead to the gating of TRPM5. In Pongo pygmaeus (Bornean orangutan), this protein is Taste receptor type 2 member 38 (TAS2R38).